A 372-amino-acid chain; its full sequence is MSIAPPPLSVLLELTHRCPLACPYCSNPIALAALREEMDTAGWRSLLQQAADMGVLQAHFSGGEPMLRKDLPELVAHARALGLYSNLITSGVAGGEPMLDQLQAAGLEHVQLSVQDVDPAGADRIAGYRNSLSRKREFAAAVRARGLPLTINAVLHRHNAERVPGMIALALEWQAERIEVAHTQYYGWGLRNRAALMPSREQLLATIDAVETARRQLGDRLAIDFVTPDYYARQPKPCMGGWGQRFVNISPRGDVLPCHAAETIEGMRFDNLRERSLADIWNNGEAFVRFRGTAWMPEVCQGCPKREIDWGGCRCQALALSGDAATLDPVCERSPIHAQVRAAAEQESASPAPAFVYRRPERLAPAAADMLE.

The region spanning 4-220 (APPPLSVLLE…ETARRQLGDR (217 aa)) is the Radical SAM core domain. The [4Fe-4S] cluster site is built by Cys-18, Cys-22, and Cys-25.

It belongs to the radical SAM superfamily. PqqE family. In terms of assembly, interacts with PqqD. The interaction is necessary for activity of PqqE. [4Fe-4S] cluster is required as a cofactor.

It carries out the reaction [PQQ precursor protein] + S-adenosyl-L-methionine = E-Y cross-linked-[PQQ precursor protein] + 5'-deoxyadenosine + L-methionine + H(+). It functions in the pathway cofactor biosynthesis; pyrroloquinoline quinone biosynthesis. In terms of biological role, catalyzes the cross-linking of a glutamate residue and a tyrosine residue in the PqqA protein as part of the biosynthesis of pyrroloquinoline quinone (PQQ). The protein is PqqA peptide cyclase of Xanthomonas axonopodis pv. citri (strain 306).